A 194-amino-acid polypeptide reads, in one-letter code: Large ribosomal subunit protein bL17 (194 aa).

The interval 126–194 (AEPKQTKART…SPEQTNKQEE (69 aa)) is disordered. Residues 131–140 (TKARTRRGKG) are compositionally biased toward basic residues. Composition is skewed to polar residues over residues 144 to 161 (ATTT…QDMA) and 181 to 194 (LDTQ…KQEE).

The protein belongs to the bacterial ribosomal protein bL17 family. Part of the 50S ribosomal subunit. Contacts protein L32.

This chain is Large ribosomal subunit protein bL17, found in Amoebophilus asiaticus (strain 5a2).